We begin with the raw amino-acid sequence, 308 residues long: Cytochrome b (308 aa).

A run of 4 helical transmembrane segments spans residues 1–21, 45–66, 81–101, and 146–166; these read SGSLLGMCLIVRIITGLFLAA, WLIRNLHANGASLFFICIYLHI, WNIGVILLLALMATAFVGYVL, and FFALHFLLPFVIAGLTLVHLT. 2 residues coordinate heme b: histidine 51 and histidine 65. 2 residues coordinate heme b: histidine 150 and histidine 164. Histidine 169 contributes to the a ubiquinone binding site. 3 consecutive transmembrane segments (helical) span residues 194 to 214, 256 to 276, and 288 to 308; these read TKDVLGFALLLTPLIALALFS, LGGVLALAASVLVLFLIPLLH, and LSQILFWALVANLLVLTWVGS.

This sequence belongs to the cytochrome b family. As to quaternary structure, the cytochrome bc1 complex contains 11 subunits: 3 respiratory subunits (MT-CYB, CYC1 and UQCRFS1), 2 core proteins (UQCRC1 and UQCRC2) and 6 low-molecular weight proteins (UQCRH/QCR6, UQCRB/QCR7, UQCRQ/QCR8, UQCR10/QCR9, UQCR11/QCR10 and a cleavage product of UQCRFS1). This cytochrome bc1 complex then forms a dimer. Heme b serves as cofactor.

The protein localises to the mitochondrion inner membrane. Functionally, component of the ubiquinol-cytochrome c reductase complex (complex III or cytochrome b-c1 complex) that is part of the mitochondrial respiratory chain. The b-c1 complex mediates electron transfer from ubiquinol to cytochrome c. Contributes to the generation of a proton gradient across the mitochondrial membrane that is then used for ATP synthesis. This is Cytochrome b (MT-CYB) from Garritornis isidorei (Papuan babbler).